Reading from the N-terminus, the 707-residue chain is Potassium-transporting ATPase ATP-binding subunit (707 aa).

Basic and acidic residues predominate over residues 1-11; it reads MNTDTQKHEDA. A disordered region spans residues 1 to 37; the sequence is MNTDTQKHEDAMSTTTPARAPHDDAPSGQQPGQGRVG. The next 4 membrane-spanning stretches (helical) occupy residues 61–81, 89–109, 238–258, and 271–291; these read VMAK…TTAF, WFGW…NLAE, IALN…CATL, and MIVL…ALLS. Asp-326 functions as the 4-aspartylphosphate intermediate in the catalytic mechanism. Residues Asp-363, Glu-367, 397–404, and Lys-415 each bind ATP; that span reads FTAQTRMS. Residues Asp-542 and Asp-546 each coordinate Mg(2+). Transmembrane regions (helical) follow at residues 612–632, 640–660, and 683–703; these read FAII…LNIM, AILS…PLAL, and LGGL…VSLI.

Belongs to the cation transport ATPase (P-type) (TC 3.A.3) family. Type IA subfamily. As to quaternary structure, the system is composed of three essential subunits: KdpA, KdpB and KdpC.

The protein localises to the cell membrane. It catalyses the reaction K(+)(out) + ATP + H2O = K(+)(in) + ADP + phosphate + H(+). Functionally, part of the high-affinity ATP-driven potassium transport (or Kdp) system, which catalyzes the hydrolysis of ATP coupled with the electrogenic transport of potassium into the cytoplasm. This subunit is responsible for energy coupling to the transport system and for the release of the potassium ions to the cytoplasm. The protein is Potassium-transporting ATPase ATP-binding subunit of Streptomyces coelicolor (strain ATCC BAA-471 / A3(2) / M145).